A 494-amino-acid chain; its full sequence is 3-octaprenyl-4-hydroxybenzoate carboxy-lyase (494 aa).

Asparagine 172 serves as a coordination point for Mn(2+). Residues 175–177 (IYR), 189–191 (RWL), and 194–195 (RG) contribute to the prenylated FMN site. Glutamate 238 contacts Mn(2+). Catalysis depends on aspartate 287, which acts as the Proton donor.

It belongs to the UbiD family. As to quaternary structure, homohexamer. Requires prenylated FMN as cofactor. It depends on Mn(2+) as a cofactor.

The protein resides in the cell membrane. It carries out the reaction a 4-hydroxy-3-(all-trans-polyprenyl)benzoate + H(+) = a 2-(all-trans-polyprenyl)phenol + CO2. It functions in the pathway cofactor biosynthesis; ubiquinone biosynthesis. Its function is as follows. Catalyzes the decarboxylation of 3-octaprenyl-4-hydroxy benzoate to 2-octaprenylphenol, an intermediate step in ubiquinone biosynthesis. The polypeptide is 3-octaprenyl-4-hydroxybenzoate carboxy-lyase (Cronobacter sakazakii (strain ATCC BAA-894) (Enterobacter sakazakii)).